Here is a 332-residue protein sequence, read N- to C-terminus: Ribosomal RNA small subunit methyltransferase H (332 aa).

Residues 36-38 (GGY), aspartate 54, phenylalanine 81, aspartate 102, and glutamine 109 contribute to the S-adenosyl-L-methionine site. The interval 297 to 318 (ARSAKLRGAERTEAPAHAAGDL) is disordered.

It belongs to the methyltransferase superfamily. RsmH family.

It localises to the cytoplasm. It carries out the reaction cytidine(1402) in 16S rRNA + S-adenosyl-L-methionine = N(4)-methylcytidine(1402) in 16S rRNA + S-adenosyl-L-homocysteine + H(+). Specifically methylates the N4 position of cytidine in position 1402 (C1402) of 16S rRNA. The sequence is that of Ribosomal RNA small subunit methyltransferase H from Rhodopseudomonas palustris (strain TIE-1).